We begin with the raw amino-acid sequence, 647 residues long: Nucleoside triphosphatase I (647 aa).

The 166-residue stretch at 48–213 folds into the Helicase ATP-binding domain; it reads FIGLSELNSL…KYLINLLRPK (166 aa). 61–68 provides a ligand contact to ATP; that stretch reads WDTGYGKT. Residues 150–153 carry the DEXH box motif; that stretch reads DEVH. The region spanning 377 to 540 is the Helicase C-terminal domain; sequence YIEACKIILN…KINVLNSFMK (164 aa). Positions 466–532 are binding to the cap-specific mRNA (nucleoside-2'-O-)-methyltransferase; that stretch reads DIIILDLPWK…DLIKSKQDKI (67 aa).

Belongs to the helicase family. NPH I subfamily. As to quaternary structure, monomer. Interacts (via C-terminus) with RAP94 (via N-terminus). Interacts with the cap-specific mRNA (nucleoside-2'-O-)-methyltransferase.

Its subcellular location is the virion. It catalyses the reaction a ribonucleoside 5'-triphosphate + H2O = a ribonucleoside 5'-diphosphate + phosphate + H(+). DNA-dependent ATPase required for providing the needed energy to achieve the termination of early transcripts. Acts in concert with the RAP94 subunit of the virion RNA polymerase and the capping enzyme/VTF to catalyze release of UUUUUNU-containing nascent RNA from the elongation complex. NPH-I must bind ssDNA in order to exhibit ATPase activity. The polypeptide is Nucleoside triphosphatase I (NPH1) (Melanoplus sanguinipes entomopoxvirus (MsEPV)).